Reading from the N-terminus, the 132-residue chain is Small ribosomal subunit protein uS8 (132 aa).

This sequence belongs to the universal ribosomal protein uS8 family. Part of the 30S ribosomal subunit. Contacts proteins S5 and S12.

One of the primary rRNA binding proteins, it binds directly to 16S rRNA central domain where it helps coordinate assembly of the platform of the 30S subunit. This chain is Small ribosomal subunit protein uS8, found in Paramagnetospirillum magneticum (strain ATCC 700264 / AMB-1) (Magnetospirillum magneticum).